The following is a 174-amino-acid chain: Ribosome maturation factor RimP (174 aa).

Belongs to the RimP family.

It is found in the cytoplasm. In terms of biological role, required for maturation of 30S ribosomal subunits. The sequence is that of Ribosome maturation factor RimP from Acinetobacter baumannii (strain AB307-0294).